The chain runs to 715 residues: Fatty acid oxidation complex subunit alpha (715 aa).

The segment at 1-190 (MTTTSAFMLN…RAGLVDDVVP (190 aa)) is enoyl-CoA hydratase. Residues 306-715 (GPLNSVGILG…WTNGETDQGN (410 aa)) are 3-hydroxyacyl-CoA dehydrogenase.

In the N-terminal section; belongs to the enoyl-CoA hydratase/isomerase family. This sequence in the central section; belongs to the 3-hydroxyacyl-CoA dehydrogenase family. Heterotetramer of two alpha chains (FadJ) and two beta chains (FadI).

The protein localises to the cytoplasm. It carries out the reaction a (3S)-3-hydroxyacyl-CoA = a (2E)-enoyl-CoA + H2O. The catalysed reaction is a 4-saturated-(3S)-3-hydroxyacyl-CoA = a (3E)-enoyl-CoA + H2O. It catalyses the reaction a (3S)-3-hydroxyacyl-CoA + NAD(+) = a 3-oxoacyl-CoA + NADH + H(+). The enzyme catalyses (3S)-3-hydroxybutanoyl-CoA = (3R)-3-hydroxybutanoyl-CoA. The protein operates within lipid metabolism; fatty acid beta-oxidation. Its function is as follows. Catalyzes the formation of a hydroxyacyl-CoA by addition of water on enoyl-CoA. Also exhibits 3-hydroxyacyl-CoA epimerase and 3-hydroxyacyl-CoA dehydrogenase activities. The polypeptide is Fatty acid oxidation complex subunit alpha (Salmonella schwarzengrund (strain CVM19633)).